A 1163-amino-acid polypeptide reads, in one-letter code: Spike glycoprotein (1163 aa).

The N-terminal stretch at 1 to 18 is a signal peptide; that stretch reads MLERSLLLATLLSALCSA. Topologically, residues 19–1096 are extracellular; the sequence is NLFGNNSYVY…LKTYIKWPWY (1078 aa). 24 N-linked (GlcNAc...) asparagine; by host glycosylation sites follow: asparagine 23, asparagine 51, asparagine 74, asparagine 102, asparagine 139, asparagine 145, asparagine 164, asparagine 179, asparagine 213, asparagine 238, asparagine 248, asparagine 265, asparagine 272, asparagine 277, asparagine 307, asparagine 426, asparagine 448, asparagine 514, asparagine 531, asparagine 543, asparagine 580, asparagine 592, asparagine 670, and asparagine 677. A heptad repeat 1 (HR1) region spans residues 770–875; the sequence is IPFATQLQAR…QVDRIITGRL (106 aa). Residues 823–867 are a coiled coil; that stretch reads QDVVNKQSSILTETMASLNKNFGAISSVLQDIYQQLDSIQADAQV. N-linked (GlcNAc...) asparagine; by host glycans are attached at residues asparagine 948, asparagine 961, asparagine 980, asparagine 1015, asparagine 1039, asparagine 1052, and asparagine 1075. Residues 1025–1106 form a heptad repeat 2 (HR2) region; sequence NDDFDFDDEL…VWLAIAFLTI (82 aa). The stretch at 1056–1084 forms a coiled coil; that stretch reads PILDIGSEIDRIQGVIQGLNDSLIDLETL. The helical transmembrane segment at 1097-1117 threads the bilayer; the sequence is VWLAIAFLTIIFILVLCWIFF. Residues 1118 to 1163 lie on the Cytoplasmic side of the membrane; that stretch reads MTGCCGCCCGCFGIIPLMSKCGKKSSYYTTFDNDVVYEQYRPKKSV. The Di-lysine motif signature appears at 1160–1163; the sequence is KKSV.

It belongs to the gammacoronaviruses spike protein family. As to quaternary structure, homotrimer; each monomer consists of a S1 and a S2 subunit. The resulting peplomers protrude from the virus surface as spikes. In terms of processing, specific enzymatic cleavages in vivo yield mature proteins. The precursor is processed into S1 and S2 by host cell furin or furin-like protease to yield the mature S1 and S2 proteins. The cleavage site between S1 and S2 requires the optimal sequence [KR]-X-[KR]-R. Additionally, a second cleavage leads to the release of a fusion peptide after viral attachment to host cell receptor.

It localises to the virion membrane. The protein resides in the host endoplasmic reticulum-Golgi intermediate compartment membrane. Its function is as follows. Attaches the virion to the host cell membrane by interacting with sialic acids, initiating the infection. Mediates fusion of the virion and cellular membranes by acting as a class I viral fusion protein. Under the current model, the protein has at least 3 conformational states: pre-fusion native state, pre-hairpin intermediate state, and post-fusion hairpin state. During viral and target cell membrane fusion, the coiled coil regions (heptad repeats) assume a trimer-of-hairpins structure, positioning the fusion peptide in close proximity to the C-terminal region of the ectodomain. The formation of this structure appears to drive apposition and subsequent fusion of viral and target cell membranes. Functionally, acts as a viral fusion peptide after S2 cleavage occurring upon virus endocytosis. The sequence is that of Spike glycoprotein from Gallus gallus (Chicken).